The following is a 110-amino-acid chain: Large ribosomal subunit protein uL22 (110 aa).

It belongs to the universal ribosomal protein uL22 family. As to quaternary structure, part of the 50S ribosomal subunit.

Functionally, this protein binds specifically to 23S rRNA; its binding is stimulated by other ribosomal proteins, e.g. L4, L17, and L20. It is important during the early stages of 50S assembly. It makes multiple contacts with different domains of the 23S rRNA in the assembled 50S subunit and ribosome. In terms of biological role, the globular domain of the protein is located near the polypeptide exit tunnel on the outside of the subunit, while an extended beta-hairpin is found that lines the wall of the exit tunnel in the center of the 70S ribosome. This Histophilus somni (strain 129Pt) (Haemophilus somnus) protein is Large ribosomal subunit protein uL22.